The chain runs to 220 residues: Translation initiation factor 6 (220 aa).

This sequence belongs to the eIF-6 family.

Its function is as follows. Binds to the 50S ribosomal subunit and prevents its association with the 30S ribosomal subunit to form the 70S initiation complex. The chain is Translation initiation factor 6 from Pyrobaculum aerophilum (strain ATCC 51768 / DSM 7523 / JCM 9630 / CIP 104966 / NBRC 100827 / IM2).